A 355-amino-acid polypeptide reads, in one-letter code: N-acetyl-gamma-glutamyl-phosphate reductase (355 aa).

Cysteine 152 is an active-site residue.

The protein belongs to the NAGSA dehydrogenase family. Type 1 subfamily.

It localises to the cytoplasm. The catalysed reaction is N-acetyl-L-glutamate 5-semialdehyde + phosphate + NADP(+) = N-acetyl-L-glutamyl 5-phosphate + NADPH + H(+). Its pathway is amino-acid biosynthesis; L-arginine biosynthesis; N(2)-acetyl-L-ornithine from L-glutamate: step 3/4. Catalyzes the NADPH-dependent reduction of N-acetyl-5-glutamyl phosphate to yield N-acetyl-L-glutamate 5-semialdehyde. This chain is N-acetyl-gamma-glutamyl-phosphate reductase, found in Psychrobacter sp. (strain PRwf-1).